The sequence spans 580 residues: Serine/threonine-protein kinase srk1 (580 aa).

A compositionally biased stretch (polar residues) spans 51-61 (VADSTQNPTSK). Residues 51-91 (VADSTQNPTSKPKSRHAHFHETVHENPSEYSRSKCKQPTNE) form a disordered region. Residues 124-421 (YTLLQKMGDG…IHQFLAHPWI (298 aa)) enclose the Protein kinase domain. ATP-binding positions include 130-138 (MGDGAFSNV) and Lys-153. The active-site Proton acceptor is the Asp-257. The disordered stretch occupies residues 530–580 (NLSGENDPSLASRQPAQSQQQSSQRSRNKFKGFQLNLSKATLYNRRHRQKV). The span at 537–554 (PSLASRQPAQSQQQSSQR) shows a compositional bias: low complexity.

This sequence belongs to the protein kinase superfamily. CAMK Ser/Thr protein kinase family. CaMK subfamily. Requires Mg(2+) as cofactor. Post-translationally, phosphorylated by sty1.

Its subcellular location is the cytoplasm. It is found in the nucleus. The protein resides in the nucleolus. The protein localises to the spore core. The catalysed reaction is L-seryl-[protein] + ATP = O-phospho-L-seryl-[protein] + ADP + H(+). The enzyme catalyses L-threonyl-[protein] + ATP = O-phospho-L-threonyl-[protein] + ADP + H(+). In terms of biological role, delays the mitotic G2/M transition by promoting nuclear exclusion of cdc25. During osmotic stress, inhibits the G2/M transition in a sty1 stress-activated MAPK pathway-dependent manner. The polypeptide is Serine/threonine-protein kinase srk1 (Schizosaccharomyces pombe (strain 972 / ATCC 24843) (Fission yeast)).